Reading from the N-terminus, the 335-residue chain is Glycerol-3-phosphate dehydrogenase [NAD(P)+] (335 aa).

The NADPH site is built by Trp-11, Arg-30, and Lys-106. 3 residues coordinate sn-glycerol 3-phosphate: Lys-106, Gly-135, and Ser-137. NADPH is bound at residue Ala-139. Residues Lys-190, Asp-243, Ser-253, Arg-254, and Asn-255 each contribute to the sn-glycerol 3-phosphate site. The Proton acceptor role is filled by Lys-190. An NADPH-binding site is contributed by Arg-254. Val-278 and Glu-280 together coordinate NADPH.

This sequence belongs to the NAD-dependent glycerol-3-phosphate dehydrogenase family.

Its subcellular location is the cytoplasm. The enzyme catalyses sn-glycerol 3-phosphate + NAD(+) = dihydroxyacetone phosphate + NADH + H(+). It carries out the reaction sn-glycerol 3-phosphate + NADP(+) = dihydroxyacetone phosphate + NADPH + H(+). Its pathway is membrane lipid metabolism; glycerophospholipid metabolism. Functionally, catalyzes the reduction of the glycolytic intermediate dihydroxyacetone phosphate (DHAP) to sn-glycerol 3-phosphate (G3P), the key precursor for phospholipid synthesis. In Paucimonas lemoignei (Pseudomonas lemoignei), this protein is Glycerol-3-phosphate dehydrogenase [NAD(P)+].